The primary structure comprises 226 residues: Probable N-acetyl-alpha-D-glucosaminyl L-malate deacetylase 2 (226 aa).

Residues histidine 13, aspartate 16, and histidine 127 each coordinate Zn(2+).

This sequence belongs to the PIGL family. Zn(2+) is required as a cofactor.

It catalyses the reaction (S)-malyl N-acetyl-alpha-D-glucosaminide + H2O = (S)-malyl alpha-D-glucosaminide + acetate. Functionally, involved in bacillithiol (BSH) biosynthesis. Catalyzes the second step of the pathway, the deacetylation of N-acetylglucosaminylmalate (GlcNAc-Mal) to glucosamine malate (GlcN-Mal). Could also be involved in bacillithiol-detoxifying pathways through formation of S-mercapturic adducts. This Bacillus anthracis protein is Probable N-acetyl-alpha-D-glucosaminyl L-malate deacetylase 2.